The chain runs to 437 residues: Probable glycine dehydrogenase (decarboxylating) subunit 1 (437 aa).

It belongs to the GcvP family. N-terminal subunit subfamily. In terms of assembly, the glycine cleavage system is composed of four proteins: P, T, L and H. In this organism, the P 'protein' is a heterodimer of two subunits.

The catalysed reaction is N(6)-[(R)-lipoyl]-L-lysyl-[glycine-cleavage complex H protein] + glycine + H(+) = N(6)-[(R)-S(8)-aminomethyldihydrolipoyl]-L-lysyl-[glycine-cleavage complex H protein] + CO2. The glycine cleavage system catalyzes the degradation of glycine. The P protein binds the alpha-amino group of glycine through its pyridoxal phosphate cofactor; CO(2) is released and the remaining methylamine moiety is then transferred to the lipoamide cofactor of the H protein. The polypeptide is Probable glycine dehydrogenase (decarboxylating) subunit 1 (Thermotoga maritima (strain ATCC 43589 / DSM 3109 / JCM 10099 / NBRC 100826 / MSB8)).